A 228-amino-acid polypeptide reads, in one-letter code: CD302 antigen (228 aa).

Positions 1–20 (MPHAALSSLVLLSLATAIFA) are cleaved as a signal peptide. Over 21-165 (DCPSSIWVQF…YDKKYLSDNH (145 aa)) the chain is Extracellular. The C-type lectin domain occupies 30–149 (FQGSCYTFLQ…CEMSSVTGTL (120 aa)). Asn-107 carries N-linked (GlcNAc...) asparagine glycosylation. Cysteines 125 and 140 form a disulfide. The chain crosses the membrane as a helical span at residues 166–186 (ILISTLVIASTVTLAVLGAVI). Residues 187–228 (WFLYRRSARSGFTSFSPAPQSPYSDGCALVVSEEDEYSVQLD) lie on the Cytoplasmic side of the membrane.

The protein resides in the membrane. It is found in the cell projection. The protein localises to the filopodium. It localises to the cytoplasm. Its subcellular location is the cell cortex. The protein resides in the microvillus. In terms of biological role, potential multifunctional C-type lectin receptor that may play roles in endocytosis and phagocytosis as well as in cell adhesion and migration. The chain is CD302 antigen (Cd302) from Rattus norvegicus (Rat).